The chain runs to 314 residues: N-myc-interactor (314 aa).

The segment at 1-24 (MDADKDNIKQACDERSAEMDDMRG) is disordered. Position 16 is a phosphoserine (S16). A coiled-coil region spans residues 31-65 (VHEIMSENKELDEEIKKLEAELQSDAREFQIKENV). 2 NID domains span residues 104–193 (GQAL…GEVE) and 202–293 (RSAV…EVEV).

This sequence belongs to the NMI family. In terms of assembly, interacts with MYCN and MYC, as well as with other transcription factors with a Zip, HLH or a HLH-Zip motif. Interacts with all STAT proteins except STAT2. Interacts with IRF7, the interaction is direct and leads to the inhibition of IRF7-mediated type I IFN production. Interacts (via coiled-coil domain) with TRIM21 (via the SPRY domain); the interaction leads to 'Lys-63'-linked ubiquitination of NMI. Interacts with IFI35; the interaction is direct and is facilitated by TRIM21. Interacts with TLR4; the interaction is direct and leads to NF-kappa-B activation. Post-translationally, may be ubiquitinated. In terms of tissue distribution, expressed in macrophages.

It is found in the cytoplasm. The protein localises to the nucleus. The protein resides in the secreted. In terms of biological role, acts as a signaling pathway regulator involved in innate immune system response. In response to interleukin 2/IL2 and interferon IFN-gamma/IFNG, interacts with signal transducer and activator of transcription/STAT which activate the transcription of downstream genes involved in a multitude of signals for development and homeostasis. Enhances the recruitment of CBP/p300 coactivators to STAT1 and STAT5, resulting in increased STAT1- and STAT5-dependent transcription. In response to interferon IFN-alpha, associates in a complex with transcriptional regulator IFI35 to regulate immune response; the complex formation prevents proteasome-mediated degradation of IFI35. In complex with IFI35, negatively regulates nuclear factor NF-kappa-B signaling by inhibiting the nuclear translocation, activation and transcription of NF-kappa-B subunit p65/RELA, resulting in the inhibition of endothelial cell proliferation, migration and re-endothelialization of injured arteries. Negatively regulates virus-triggered type I interferon/IFN production by inducing proteosome-dependent degradation of IRF7, a transcriptional regulator of type I IFN, thereby interfering with cellular antiviral responses. Beside its role as an intracellular signaling pathway regulator, also functions extracellularly as damage-associated molecular patterns (DAMPs) to promote inflammation, when actively released by macrophage to the extracellular space during cell injury or pathogen invasion. Macrophage-secreted NMI activates NF-kappa-B signaling in adjacent macrophages through Toll-like receptor 4/TLR4 binding and activation, thereby inducing NF-kappa-B translocation from the cytoplasm into the nucleus which promotes the release of pro-inflammatory cytokines. The polypeptide is N-myc-interactor (Mus musculus (Mouse)).